Reading from the N-terminus, the 141-residue chain is Large ribosomal subunit protein uL16 (141 aa).

The protein belongs to the universal ribosomal protein uL16 family. As to quaternary structure, part of the 50S ribosomal subunit.

Functionally, binds 23S rRNA and is also seen to make contacts with the A and possibly P site tRNAs. This chain is Large ribosomal subunit protein uL16, found in Rhodospirillum centenum (strain ATCC 51521 / SW).